The primary structure comprises 481 residues: MGDAESTKDRLLLPVERVENVTWSDLRDGSFTVELKRLIFFAAPMAAVVIAQFMLQIVSMMMVGHLGNLSLASASLASSFCNVTGFSFIIGLSCALDTLSGQAYGAKLYRKLGVQTYTAMFCLALVCLPLSLIWFNMEKLLLILGQDPSIAHEAGKYATWLIPGLFAYAVLQPLTRYFQNQSLITPLLITSYVVFCIHVPLCWFLVYNSGLGNLGGALAISLSNWLYAIFLGSFMYYSSACSETRAPLSMEIFDGIGEFFKYALPSAAMICLEWWSYELIILLSGLLPNPQLETSVLSVCLQTISTMYSIPLAIAAAASTRISNELGAGNSRAAHIVVYAAMSLAVIDALIVSMSLLIGRNLFGHIFSSDKETIDYVAKMAPLVSISLMLDALQGVLSGIARGCGWQHIGAYINLGAFYLWGIPIAASLAFWIHLKGVGLWIGIQAGAVLQTLLLALVTGCTNWESQADKARNRMALAYGT.

A run of 12 helical transmembrane segments spans residues 38 to 58 (LIFF…LQIV), 76 to 96 (LASS…SCAL), 117 to 137 (YTAM…WFNM), 154 to 174 (AGKY…LQPL), 187 to 207 (LLIT…FLVY), 214 to 234 (LGGA…LGSF), 267 to 287 (AAMI…SGLL), 296 to 316 (VLSV…AIAA), 336 to 356 (IVVY…SMSL), 380 to 400 (MAPL…LSGI), 415 to 435 (LGAF…WIHL), and 438 to 458 (VGLW…LALV).

This sequence belongs to the multi antimicrobial extrusion (MATE) (TC 2.A.66.1) family.

Its subcellular location is the membrane. This Arabidopsis thaliana (Mouse-ear cress) protein is Protein DETOXIFICATION 12.